The sequence spans 1412 residues: DNA-directed RNA polymerase subunit beta' (1412 aa).

Zn(2+)-binding residues include cysteine 70, cysteine 72, cysteine 85, and cysteine 88. Mg(2+)-binding residues include aspartate 460, aspartate 462, and aspartate 464. Residues cysteine 819, cysteine 893, cysteine 900, and cysteine 903 each coordinate Zn(2+). Residues 1392 to 1412 (EEAFEFGTPSAPAEEPQHPAE) form a disordered region.

The protein belongs to the RNA polymerase beta' chain family. In terms of assembly, the RNAP catalytic core consists of 2 alpha, 1 beta, 1 beta' and 1 omega subunit. When a sigma factor is associated with the core the holoenzyme is formed, which can initiate transcription. It depends on Mg(2+) as a cofactor. Zn(2+) is required as a cofactor.

The catalysed reaction is RNA(n) + a ribonucleoside 5'-triphosphate = RNA(n+1) + diphosphate. Its function is as follows. DNA-dependent RNA polymerase catalyzes the transcription of DNA into RNA using the four ribonucleoside triphosphates as substrates. The sequence is that of DNA-directed RNA polymerase subunit beta' from Burkholderia mallei (strain NCTC 10247).